The following is a 304-amino-acid chain: Ornithine carbamoyltransferase (304 aa).

Residues 53-56 (STRT), Q80, R104, and 131-134 (HPCQ) contribute to the carbamoyl phosphate site. L-ornithine-binding positions include N162, D222, and 226 to 227 (SM). Carbamoyl phosphate is bound by residues 261–262 (CL) and R289.

The protein belongs to the aspartate/ornithine carbamoyltransferase superfamily. OTCase family.

It localises to the cytoplasm. It carries out the reaction carbamoyl phosphate + L-ornithine = L-citrulline + phosphate + H(+). It functions in the pathway amino-acid biosynthesis; L-arginine biosynthesis; L-arginine from L-ornithine and carbamoyl phosphate: step 1/3. In terms of biological role, reversibly catalyzes the transfer of the carbamoyl group from carbamoyl phosphate (CP) to the N(epsilon) atom of ornithine (ORN) to produce L-citrulline. The chain is Ornithine carbamoyltransferase from Rhizobium johnstonii (strain DSM 114642 / LMG 32736 / 3841) (Rhizobium leguminosarum bv. viciae).